The chain runs to 173 residues: ATP synthase subunit b (173 aa).

Residues 18 to 38 (IFWSLVILIIVAVFFYKFFLP) form a helical membrane-spanning segment.

It belongs to the ATPase B chain family. As to quaternary structure, F-type ATPases have 2 components, F(1) - the catalytic core - and F(0) - the membrane proton channel. F(1) has five subunits: alpha(3), beta(3), gamma(1), delta(1), epsilon(1). F(0) has three main subunits: a(1), b(2) and c(10-14). The alpha and beta chains form an alternating ring which encloses part of the gamma chain. F(1) is attached to F(0) by a central stalk formed by the gamma and epsilon chains, while a peripheral stalk is formed by the delta and b chains.

The protein resides in the cell membrane. Its function is as follows. F(1)F(0) ATP synthase produces ATP from ADP in the presence of a proton or sodium gradient. F-type ATPases consist of two structural domains, F(1) containing the extramembraneous catalytic core and F(0) containing the membrane proton channel, linked together by a central stalk and a peripheral stalk. During catalysis, ATP synthesis in the catalytic domain of F(1) is coupled via a rotary mechanism of the central stalk subunits to proton translocation. Component of the F(0) channel, it forms part of the peripheral stalk, linking F(1) to F(0). The chain is ATP synthase subunit b from Bifidobacterium adolescentis (strain ATCC 15703 / DSM 20083 / NCTC 11814 / E194a).